The sequence spans 224 residues: Phosphoribosylformylglycinamidine synthase subunit PurQ (224 aa).

One can recognise a Glutamine amidotransferase type-1 domain in the interval 3 to 224 (FGVVVFPGSN…GLLEKVVALA (222 aa)). Cys86 (nucleophile) is an active-site residue. Active-site residues include His195 and Glu197.

As to quaternary structure, part of the FGAM synthase complex composed of 1 PurL, 1 PurQ and 2 PurS subunits.

The protein localises to the cytoplasm. It carries out the reaction N(2)-formyl-N(1)-(5-phospho-beta-D-ribosyl)glycinamide + L-glutamine + ATP + H2O = 2-formamido-N(1)-(5-O-phospho-beta-D-ribosyl)acetamidine + L-glutamate + ADP + phosphate + H(+). It catalyses the reaction L-glutamine + H2O = L-glutamate + NH4(+). It participates in purine metabolism; IMP biosynthesis via de novo pathway; 5-amino-1-(5-phospho-D-ribosyl)imidazole from N(2)-formyl-N(1)-(5-phospho-D-ribosyl)glycinamide: step 1/2. Functionally, part of the phosphoribosylformylglycinamidine synthase complex involved in the purines biosynthetic pathway. Catalyzes the ATP-dependent conversion of formylglycinamide ribonucleotide (FGAR) and glutamine to yield formylglycinamidine ribonucleotide (FGAM) and glutamate. The FGAM synthase complex is composed of three subunits. PurQ produces an ammonia molecule by converting glutamine to glutamate. PurL transfers the ammonia molecule to FGAR to form FGAM in an ATP-dependent manner. PurS interacts with PurQ and PurL and is thought to assist in the transfer of the ammonia molecule from PurQ to PurL. In Nostoc sp. (strain PCC 7120 / SAG 25.82 / UTEX 2576), this protein is Phosphoribosylformylglycinamidine synthase subunit PurQ.